A 210-amino-acid polypeptide reads, in one-letter code: Outer-membrane lipoprotein LolB (210 aa).

Residues 1 to 29 form the signal peptide; that stretch reads MSLISNNEERSLRVRYCIAIALSALLISG. Residue C30 is the site of N-palmitoyl cysteine attachment. A lipid anchor (S-diacylglycerol cysteine) is attached at C30.

This sequence belongs to the LolB family. As to quaternary structure, monomer.

The protein resides in the cell outer membrane. Its function is as follows. Plays a critical role in the incorporation of lipoproteins in the outer membrane after they are released by the LolA protein. The chain is Outer-membrane lipoprotein LolB from Coxiella burnetii (strain CbuK_Q154) (Coxiella burnetii (strain Q154)).